Reading from the N-terminus, the 479-residue chain is Glutamate--tRNA ligase (479 aa).

A 'HIGH' region motif is present at residues P9–T19. The 'KMSKS' region signature appears at K243 to R247. K246 lines the ATP pocket.

Belongs to the class-I aminoacyl-tRNA synthetase family. Glutamate--tRNA ligase type 1 subfamily. In terms of assembly, monomer.

The protein resides in the cytoplasm. The catalysed reaction is tRNA(Glu) + L-glutamate + ATP = L-glutamyl-tRNA(Glu) + AMP + diphosphate. In terms of biological role, catalyzes the attachment of glutamate to tRNA(Glu) in a two-step reaction: glutamate is first activated by ATP to form Glu-AMP and then transferred to the acceptor end of tRNA(Glu). The sequence is that of Glutamate--tRNA ligase from Synechococcus sp. (strain JA-2-3B'a(2-13)) (Cyanobacteria bacterium Yellowstone B-Prime).